Consider the following 242-residue polypeptide: 7-cyano-7-deazaguanine synthase (242 aa).

12–22 provides a ligand contact to ATP; that stretch reads FSGGQDSTTCL. Positions 200, 215, 218, and 221 each coordinate Zn(2+).

The protein belongs to the QueC family. Requires Zn(2+) as cofactor.

The enzyme catalyses 7-carboxy-7-deazaguanine + NH4(+) + ATP = 7-cyano-7-deazaguanine + ADP + phosphate + H2O + H(+). It participates in purine metabolism; 7-cyano-7-deazaguanine biosynthesis. Catalyzes the ATP-dependent conversion of 7-carboxy-7-deazaguanine (CDG) to 7-cyano-7-deazaguanine (preQ(0)). This chain is 7-cyano-7-deazaguanine synthase, found in Nitratidesulfovibrio vulgaris (strain ATCC 29579 / DSM 644 / CCUG 34227 / NCIMB 8303 / VKM B-1760 / Hildenborough) (Desulfovibrio vulgaris).